Reading from the N-terminus, the 249-residue chain is MDMDKRIHLELRNRTPSDVKELVLDNCRSNEGKIEGLTDEFEELEFLSTINVGLTSVANLPKLNKLKKLELSDNRISGGLEVLAEKCPNLTHLNLSGNKIKDLSTIEPLKKLENLKSLDLFNCEVTNLNDYRENVFKLLPQLTYLDGYDRDDKEAPDSDAEGYVEGLDDDEEDEDEEEYDEDAQVVEDEEDEEEEEEGEEEDVSGEEEEDEEGYNDGEVDDEEDEEELGEEERGQKRKREPEDEGEDDD.

The residue at position 15 (Thr-15) is a Phosphothreonine. Ser-17 is subject to Phosphoserine. 4 LRR repeats span residues 18–38 (DVKE…EGLT), 43–64 (ELEF…PKLN), 65–87 (KLKK…AEKC), and 89–110 (NLTH…EPLK). Residues 123-161 (CEVTNLNDYRENVFKLLPQLTYLDGYDRDDKEAPDSDAE) enclose the LRRCT domain. A compositionally biased stretch (basic and acidic residues) spans 147–156 (GYDRDDKEAP). Residues 147–249 (GYDRDDKEAP…EPEDEGEDDD (103 aa)) form a disordered region. The necessary for tumor-suppressive function stretch occupies residues 150 to 174 (RDDKEAPDSDAEGYVEGLDDDEEDE). The segment covering 157–230 (DSDAEGYVEG…DEEDEEELGE (74 aa)) has biased composition (acidic residues). Phosphoserine is present on residues Ser-158 and Ser-204. The segment at 165–249 (EGLDDDEEDE…EPEDEGEDDD (85 aa)) is interaction with E4F1.

This sequence belongs to the ANP32 family. Component of the SET complex, composed of at least ANP32A, APEX1, HMGB2, NME1, SET and TREX1. Directly interacts with SET. Interacts with ATXN1/SCA1. Interacts with MAP1B. Interacts with ELAVL1. Part of the INHAT (inhibitor of histone acetyltransferases) complex. Interacts with E4F1. The N-terminus is blocked. In terms of processing, phosphorylated on serine residues, at least in part by casein kinase 2/CK2. Post-translationally, some glutamate residues are glycylated by TTLL8. This modification occurs exclusively on glutamate residues and results in a glycine chain on the gamma-carboxyl group. Widely distributed in the central nervous system, with an abundant expression in the cerebellum.

It localises to the nucleus. It is found in the cytoplasm. Its subcellular location is the endoplasmic reticulum. Functionally, multifunctional protein that is involved in the regulation of many processes including tumor suppression, apoptosis, cell cycle progression or transcription. Promotes apoptosis by favouring the activation of caspase-9/CASP9 and allowing apoptosome formation. In addition, plays a role in the modulation of histone acetylation and transcription as part of the INHAT (inhibitor of histone acetyltransferases) complex. Inhibits the histone-acetyltranferase activity of EP300/CREBBP (CREB-binding protein) and EP300/CREBBP-associated factor by histone masking. Preferentially binds to unmodified histone H3 and sterically inhibiting its acetylation and phosphorylation leading to cell growth inhibition. Participates in other biochemical processes such as regulation of mRNA nuclear-to-cytoplasmic translocation and stability by its association with ELAVL1 (Hu-antigen R). Plays a role in E4F1-mediated transcriptional repression as well as inhibition of protein phosphatase 2A. The chain is Acidic leucine-rich nuclear phosphoprotein 32 family member A (ANP32A) from Bos taurus (Bovine).